Here is a 222-residue protein sequence, read N- to C-terminus: Probable GTP-binding protein EngB (222 aa).

An EngB-type G domain is found at 25 to 199 (AGVEVAFAGR…SQLLQNWFDT (175 aa)). GTP-binding positions include 33 to 40 (GRSNAGKS), 60 to 64 (GRTQH), 78 to 81 (DLPG), 145 to 148 (TKAD), and 178 to 180 (FSS). Mg(2+) is bound by residues S40 and T62.

The protein belongs to the TRAFAC class TrmE-Era-EngA-EngB-Septin-like GTPase superfamily. EngB GTPase family. It depends on Mg(2+) as a cofactor.

Its function is as follows. Necessary for normal cell division and for the maintenance of normal septation. In Nitrosomonas europaea (strain ATCC 19718 / CIP 103999 / KCTC 2705 / NBRC 14298), this protein is Probable GTP-binding protein EngB.